A 297-amino-acid polypeptide reads, in one-letter code: Protein MIZU-KUSSEI 1 (297 aa).

In terms of tissue distribution, expressed in root meristematic region, cortical cells, lateral root cap cells, columella cells of the root cap, mature region of the roots and leaf hydathodes.

The protein localises to the endoplasmic reticulum membrane. In terms of biological role, plays a role in lateral root development by maintaining auxin levels. This function requires GNOM (GN/MIZ2) activity. Negatively regulates cytokinin sensitivity on root development. Positively regulates hydrotropism in roots. The chain is Protein MIZU-KUSSEI 1 (MIZ1) from Arabidopsis thaliana (Mouse-ear cress).